We begin with the raw amino-acid sequence, 429 residues long: 3-phosphoshikimate 1-carboxyvinyltransferase (429 aa).

Positions 23, 24, and 28 each coordinate 3-phosphoshikimate. Residue Lys23 participates in phosphoenolpyruvate binding. Gly97 and Arg125 together coordinate phosphoenolpyruvate. The 3-phosphoshikimate site is built by Ser170, Ser171, Gln172, Ser198, Asp314, Asn338, and Lys342. Phosphoenolpyruvate is bound at residue Gln172. Asp314 serves as the catalytic Proton acceptor. Phosphoenolpyruvate is bound by residues Arg346, Arg388, and Lys413.

The protein belongs to the EPSP synthase family. As to quaternary structure, monomer.

The protein localises to the cytoplasm. The enzyme catalyses 3-phosphoshikimate + phosphoenolpyruvate = 5-O-(1-carboxyvinyl)-3-phosphoshikimate + phosphate. Its pathway is metabolic intermediate biosynthesis; chorismate biosynthesis; chorismate from D-erythrose 4-phosphate and phosphoenolpyruvate: step 6/7. Functionally, catalyzes the transfer of the enolpyruvyl moiety of phosphoenolpyruvate (PEP) to the 5-hydroxyl of shikimate-3-phosphate (S3P) to produce enolpyruvyl shikimate-3-phosphate and inorganic phosphate. This Pectobacterium atrosepticum (strain SCRI 1043 / ATCC BAA-672) (Erwinia carotovora subsp. atroseptica) protein is 3-phosphoshikimate 1-carboxyvinyltransferase.